Reading from the N-terminus, the 222-residue chain is GTP-binding nuclear protein Ran-4 (222 aa).

In terms of domain architecture, Small GTPase Ran-type spans Asp-10–Asp-174. Asp-21–Thr-28 provides a ligand contact to GTP. Residues His-40–Val-48 form a switch-I region. GTP is bound by residues Gly-71, Asn-125–Asp-128, and Ser-153–Lys-155. A switch-II region spans residues Gly-71–Gln-87.

This sequence belongs to the small GTPase superfamily. Ran family. Found in a nuclear export complex with RanGTP, exportin and pre-miRNA.

It localises to the nucleus. GTP-binding protein involved in nucleocytoplasmic transport. Required for the import of protein into the nucleus and also for RNA export. Involved in chromatin condensation and control of cell cycle. This Arabidopsis thaliana (Mouse-ear cress) protein is GTP-binding nuclear protein Ran-4 (RAN4).